The sequence spans 110 residues: Large ribosomal subunit protein uL22 (110 aa).

The protein belongs to the universal ribosomal protein uL22 family. In terms of assembly, part of the 50S ribosomal subunit.

Its function is as follows. This protein binds specifically to 23S rRNA; its binding is stimulated by other ribosomal proteins, e.g. L4, L17, and L20. It is important during the early stages of 50S assembly. It makes multiple contacts with different domains of the 23S rRNA in the assembled 50S subunit and ribosome. Functionally, the globular domain of the protein is located near the polypeptide exit tunnel on the outside of the subunit, while an extended beta-hairpin is found that lines the wall of the exit tunnel in the center of the 70S ribosome. This chain is Large ribosomal subunit protein uL22, found in Pectobacterium atrosepticum (strain SCRI 1043 / ATCC BAA-672) (Erwinia carotovora subsp. atroseptica).